A 312-amino-acid polypeptide reads, in one-letter code: Polyprenyl transferase atnF (312 aa).

N-linked (GlcNAc...) asparagine glycosylation occurs at Asn9. The next 9 membrane-spanning stretches (helical) occupy residues 30 to 50, 64 to 84, 111 to 131, 132 to 152, 154 to 174, 185 to 205, 229 to 249, 255 to 275, and 288 to 308; these read LHTI…FFYA, FIGI…WNDI, AMWV…WLLG, ADVT…PLCK, IIWA…LPPW, GLLP…LDLI, YLKA…VLAA, GFLL…WSIM, and IFLV…LNVS.

The protein belongs to the UbiA prenyltransferase family. It depends on Mg(2+) as a cofactor.

The protein localises to the membrane. It functions in the pathway secondary metabolite biosynthesis; terpenoid biosynthesis. Its function is as follows. Polyprenyl transferase; part of the gene cluster that mediates the biosynthesis of the meroterpenoids arthripenoids. The pathway begins with the HR-PKS atnH that catalyzes two chain-extension steps to form a reduced triketide, which then primes the SAT domain in the NR-PKS atnG to initiate three more cycles of extension to give a linear hexaketide corresponding to the polyketide part of arthripenoids. The FAD-dependent monooxygenase atnJ then performs an oxidative decarboxylation at C11 of the atnH/atnG product, via an electrophilic aromatic hydroxylation with concomitant ipso-decarboxylation. The membrane-bound polyprenyl transferase atnF then introduces a farnesyl group before the FAD-dependent monooxygenase atnK functions as the first epoxidase on terminal C12'-C13' olefin, followed by a second epoxidation on C7'-C8' catalyzed by atnA. The terpene cyclase/mutase atnI then initiates the sequential tricyclic ring formation through protonation of the terminal epoxide and catalyzes the regioselective and stereoselective 6/6/6-tricyclic ring formation. The cytochrome P450 monooxygenase atnM is responsible for hydroxylating both C1' and C10'. The next steps may involve ketoreduction and acetyl transfer by the ketoreductase atnB and the acetyltransferase atnC, and lead to the production of arthripenoid B, the final biosynthetic product of the atn cluster. The hydroquinone moiety in arthripenoid B is prone to undergo spontaneous oxidation to afford a benzoquinone compound, a key intermediate for generating structure diversity. For instance, addition of a cysteine followed by ring contraction gives arthripenoid A, tautomerization gives the main product arthripenoid C, addition of a molecular of water or amine affords arthripenoid D or E, respectively, and loss of one water forms arthripenoid F. The polypeptide is Polyprenyl transferase atnF (Arthrinium sp).